We begin with the raw amino-acid sequence, 382 residues long: MSTDQSPCPSATGAELLPPPDGTLAIVPVGDIRLESGAVIPDVHLGVQRWGELSPGLDNVVLVEHALTGDSHVVGPADDVHQLPGWWNGMVGPGAPMDTDEWCVIATNVLGGCKGSTGPGSTAPDGKPWGSRFPAISIRDQVTAEAALFDRIGIHRLAAVVGGSMGGMRVLEWMVGAPERVAAALVLAVGARATADQIGTQTTQIAAITADPDWQGGDYHDTGRAPTTGMGIARRIAHLTYRTEDELDHRFANHAQDGEDPFDGGRWAVQSYLEHQAEKLCRRFDPATYVLLTEAMNRHDVGRGRGGVAAALAATPVPCVVGGVDSDRLYPLHTQQELADLLPGCARLEVVHSRDGHDGFLTETAAIGKLLVETMRLARAHR.

The disordered stretch occupies residues 1-20; the sequence is MSTDQSPCPSATGAELLPPP. In terms of domain architecture, AB hydrolase-1 spans 59-363; the sequence is NVVLVEHALT…RDGHDGFLTE (305 aa). The active-site Nucleophile is Ser-164. Arg-234 lines the substrate pocket. Residues Asp-327 and His-357 contribute to the active site. Residue Asp-358 participates in substrate binding.

It belongs to the AB hydrolase superfamily. MetX family. In terms of assembly, homodimer.

Its subcellular location is the cytoplasm. The catalysed reaction is L-homoserine + acetyl-CoA = O-acetyl-L-homoserine + CoA. The protein operates within amino-acid biosynthesis; L-methionine biosynthesis via de novo pathway; O-acetyl-L-homoserine from L-homoserine: step 1/1. Functionally, transfers an acetyl group from acetyl-CoA to L-homoserine, forming acetyl-L-homoserine. This is Homoserine O-acetyltransferase from Nocardia farcinica (strain IFM 10152).